A 413-amino-acid chain; its full sequence is Serine hydroxymethyltransferase (413 aa).

Residues leucine 120 and 124-126 (GHL) each bind (6S)-5,6,7,8-tetrahydrofolate. Lysine 228 is modified (N6-(pyridoxal phosphate)lysine).

This sequence belongs to the SHMT family. Homodimer. Requires pyridoxal 5'-phosphate as cofactor.

The protein resides in the cytoplasm. The catalysed reaction is (6R)-5,10-methylene-5,6,7,8-tetrahydrofolate + glycine + H2O = (6S)-5,6,7,8-tetrahydrofolate + L-serine. Its pathway is one-carbon metabolism; tetrahydrofolate interconversion. It participates in amino-acid biosynthesis; glycine biosynthesis; glycine from L-serine: step 1/1. In terms of biological role, catalyzes the reversible interconversion of serine and glycine with tetrahydrofolate (THF) serving as the one-carbon carrier. This reaction serves as the major source of one-carbon groups required for the biosynthesis of purines, thymidylate, methionine, and other important biomolecules. Also exhibits THF-independent aldolase activity toward beta-hydroxyamino acids, producing glycine and aldehydes, via a retro-aldol mechanism. The protein is Serine hydroxymethyltransferase of Agathobacter rectalis (strain ATCC 33656 / DSM 3377 / JCM 17463 / KCTC 5835 / VPI 0990) (Eubacterium rectale).